The primary structure comprises 435 residues: Cyclic GMP-AMP synthase-like receptor (435 aa).

Residues S70 and E82–D84 contribute to the ATP site. Mg(2+) is bound by residues E82, D84, and D209. A GTP-binding site is contributed by D209. ATP contacts are provided by residues K286 and S300–K304. Mn(2+) contacts are provided by L311, D312, and D317.

This sequence belongs to the mab-21 family. It depends on Mg(2+) as a cofactor. Mn(2+) serves as cofactor.

The catalysed reaction is GTP + ATP = 2',3'-cGAMP + 2 diphosphate. It catalyses the reaction GTP + ATP = pppGp(2'-5')A + diphosphate. It carries out the reaction pppGp(2'-5')A = 2',3'-cGAMP + diphosphate. Its function is as follows. Nucleotidyltransferase that catalyzes the formation of cyclic GMP-AMP (2',3'-cGAMP) from ATP and GTP and plays a key role in innate immunity. Directly binds some unknown ligand, activating the nucleotidyltransferase activity, leading to synthesis of 2',3'-cGAMP, a second messenger that binds to and activates Sting, thereby triggering the immune response via activation of the NF-kappa-B transcription factor. The sequence is that of Cyclic GMP-AMP synthase-like receptor from Ctenocephalides felis (Cat flea).